The sequence spans 303 residues: Recombination-associated protein RdgC (303 aa).

The protein belongs to the RdgC family.

The protein resides in the cytoplasm. Its subcellular location is the nucleoid. Its function is as follows. May be involved in recombination. The polypeptide is Recombination-associated protein RdgC (Shewanella piezotolerans (strain WP3 / JCM 13877)).